Here is a 460-residue protein sequence, read N- to C-terminus: Argininosuccinate lyase (460 aa).

It belongs to the lyase 1 family. Argininosuccinate lyase subfamily.

It localises to the cytoplasm. The catalysed reaction is 2-(N(omega)-L-arginino)succinate = fumarate + L-arginine. It participates in amino-acid biosynthesis; L-arginine biosynthesis; L-arginine from L-ornithine and carbamoyl phosphate: step 3/3. The chain is Argininosuccinate lyase from Edwardsiella ictaluri (strain 93-146).